A 200-amino-acid chain; its full sequence is Flavin prenyltransferase UbiX (200 aa).

FMN is bound by residues 15 to 17 (GAS), Thr41, 102 to 105 (SMGT), and Arg137. Residues Tyr167 and Lys183 each coordinate dimethylallyl phosphate.

Belongs to the UbiX/PAD1 family.

The catalysed reaction is dimethylallyl phosphate + FMNH2 = prenylated FMNH2 + phosphate. Functionally, flavin prenyltransferase that catalyzes the synthesis of the prenylated FMN cofactor (prenyl-FMN) for 4-hydroxy-3-polyprenylbenzoic acid decarboxylase UbiD. The prenyltransferase is metal-independent and links a dimethylallyl moiety from dimethylallyl monophosphate (DMAP) to the flavin N5 and C6 atoms of FMN. The protein is Flavin prenyltransferase UbiX of Alkalihalophilus pseudofirmus (strain ATCC BAA-2126 / JCM 17055 / OF4) (Bacillus pseudofirmus).